We begin with the raw amino-acid sequence, 420 residues long: Gamma-glutamyl phosphate reductase (420 aa).

It belongs to the gamma-glutamyl phosphate reductase family.

It localises to the cytoplasm. The catalysed reaction is L-glutamate 5-semialdehyde + phosphate + NADP(+) = L-glutamyl 5-phosphate + NADPH + H(+). The protein operates within amino-acid biosynthesis; L-proline biosynthesis; L-glutamate 5-semialdehyde from L-glutamate: step 2/2. Its function is as follows. Catalyzes the NADPH-dependent reduction of L-glutamate 5-phosphate into L-glutamate 5-semialdehyde and phosphate. The product spontaneously undergoes cyclization to form 1-pyrroline-5-carboxylate. The polypeptide is Gamma-glutamyl phosphate reductase (Shewanella amazonensis (strain ATCC BAA-1098 / SB2B)).